Consider the following 285-residue polypeptide: Aquaporin-6 (285 aa).

Helical transmembrane passes span Ile-36–Cys-56, Tyr-76–Leu-96, and Ile-105–Gly-125. Residues Asn-86–Val-88 carry the NPA 1 motif. N-linked (GlcNAc...) asparagine glycosylation is present at Asn-128. Transmembrane regions (helical) follow at residues Val-143 to Met-163 and Gly-177 to Ala-197. The short motif at Asn-206–Met-208 is the NPA 2 element. Residues Tyr-225–Thr-245 traverse the membrane as a helical segment.

It belongs to the MIP/aquaporin (TC 1.A.8) family.

It localises to the cell membrane. Probable water-specific aquaporin that may modulate the water content and osmolytes during anhydrobiosis. The polypeptide is Aquaporin-6 (Milnesium tardigradum (Water bear)).